The primary structure comprises 513 residues: Histidine ammonia-lyase (513 aa).

Positions 144 to 146 form a cross-link, 5-imidazolinone (Ala-Gly); that stretch reads ASG. Serine 145 carries the post-translational modification 2,3-didehydroalanine (Ser).

The protein belongs to the PAL/histidase family. Contains an active site 4-methylidene-imidazol-5-one (MIO), which is formed autocatalytically by cyclization and dehydration of residues Ala-Ser-Gly.

It localises to the cytoplasm. The enzyme catalyses L-histidine = trans-urocanate + NH4(+). It participates in amino-acid degradation; L-histidine degradation into L-glutamate; N-formimidoyl-L-glutamate from L-histidine: step 1/3. In Streptococcus pyogenes serotype M1, this protein is Histidine ammonia-lyase.